Here is a 194-residue protein sequence, read N- to C-terminus: Protein LURP-one-related 10 (194 aa).

Belongs to the LOR family.

In terms of biological role, might be related to the phospholipid scramblase and tubby-like superfamily of membrane tethered transcription factors. In Arabidopsis thaliana (Mouse-ear cress), this protein is Protein LURP-one-related 10.